The primary structure comprises 491 residues: 3-phosphoinositide-dependent protein kinase 1 (491 aa).

Residues 44–311 (FEFGKIYGVG…YVALKRHPFF (268 aa)) enclose the Protein kinase domain. ATP contacts are provided by residues 54 to 56 (SYS) and Lys73. A PIF-pocket region spans residues 75–119 (MDKKFITKENKTAYVKLERIVLDQLEHPGIIKLYFTFQDTSSLYM). A PIF-binding region spans residues 77–112 (KKFITKENKTAYVKLERIVLDQLEHPGIIKLYFTFQ). ATP-binding positions include 122 to 124 (ESC) and Glu128. The Proton acceptor role is filled by Asp167. Glu171 is a binding site for ATP. Residue Ser177 is modified to Phosphoserine. Asp185 provides a ligand contact to ATP. Residues 185-222 (DFGSVKPMQDSQITVLPNAASDDKACTFVGTAAYVPPE) are activation loop. Thr211 carries the phosphothreonine; by autocatalysis modification. Residues Ser276 and Ser337 each carry the phosphoserine modification. A disordered region spans residues 321–377 (SQTPPKLAPDPASQTASPERDDTHGSPWNLTHIGDSLATQNEGHSAPPTSSESSGSI). Residues 365-376 (SAPPTSSESSGS) are compositionally biased toward low complexity. Ser382 carries the post-translational modification Phosphoserine. A PH domain is found at 386–491 (FDSRWQQFLE…KKAIETLQNR (106 aa)).

Belongs to the protein kinase superfamily. AGC Ser/Thr protein kinase family. PDPK1 subfamily. In terms of assembly, interacts with AGC1-5 and AGC1-7. Interacts with the C-terminal PIF domain of the protein kinases D6PK/AGC1-1, OXI1/AGC2-1 and PID. Post-translationally, phosphorylation on Thr-211 in the activation loop is required for full activity. PDK1 itself can autophosphorylate Thr-211, leading to its own activation. Ubiquitous.

The protein resides in the cytoplasm. Its subcellular location is the membrane. The catalysed reaction is L-seryl-[protein] + ATP = O-phospho-L-seryl-[protein] + ADP + H(+). The enzyme catalyses L-threonyl-[protein] + ATP = O-phospho-L-threonyl-[protein] + ADP + H(+). Activated by phosphatidic acid (PA) and in response to the fungal elicitor xylanase. In terms of biological role, may couple lipid signals to the activation-loop phosphorylation of several protein kinases of the so-called AGC kinase family. Interacts via its pleckstrin homology domain with phosphatidic acid, PtdIns3P and PtdIns(3,4)P2 and to a lesser extent with PtdIns(4,5)P2 and PtdIns4P. May play a general role in signaling processes controlling the pathogen/stress response, polar auxin transport and development. Transphosphorylates the AGC protein kinases OXI1/AGC2-1, PK1/S6K1, PK19/S6K2 and PID resulting in their activation. The polypeptide is 3-phosphoinositide-dependent protein kinase 1 (PDPK1) (Arabidopsis thaliana (Mouse-ear cress)).